The primary structure comprises 790 residues: MALNFLQSDCPLAIIQDVISRVDAISDYGYANELSTTLPPRPSRSQVLEYITRVVDTLKPRCRVDERLYVVCGELVHLRIRTRNVEDLKYWLNSTEIALNEIVEKDILDHLDFIQRTLHAFESSEYRELCALGLQSALKYEEMYLAKMRGGRIESMGQFFLRLATTATHYTMEEPAMARVLVSGEVGWTYIFKAYFTALAGQVLIPATPIMLFGGRDCGSLASCYLLNPRVTDMNSAMLALMEEAGPILCNRGGIGLSLQRFNTPPKEGCSRGVMALLKLIDSMTMAINSDGERPTGVCVYFEPWHADIRAILNMRGMLARDETVRCDNIFACMWTPDLFFDRYQRYLDGESGVMWTLFDDTASHLCHMYGKEFEEEYERLEQCGFGVDSIPIQDMAFIIVRSAVMTGSPFLMFKDACNKHYHFDLRRKGAIMGSNLCTEIIQHADETQNGVCNLASINLPKCLAIPPPHTAGVPYFDFAALGRAAATATIFVNSMMRAGTYPTVKSQRGVDENRSLGLGIQGLHTAFLMLDLDMASPEARQLNKQIAERLLLNSMKASATLCRLGMKPFKGFEDSKYSLGELPFDSYPGVTLANRNAWRRLRTEIKQHGLYNSQFVAYMPTVSSSQVTESSEGFSPVYTNLFSKVTATGEVLRPNLLLMRTIRSIFPRECARLQALSTLEMAQWSVVGAFGDLPVGHPLSKFKTAFEYDQRTLIDMCADRAPFVDQSQSMSLFITEPADGKLPASKIMSLLVHAYKRGLKTGMYYCKIKKATNNGVFVGGDLVCTSCSL.

Residues Thr208, Ser223–Cys224, Gly254, Asn436–Glu440, and Pro621–Ser625 each bind substrate. Cys224 and Cys453 are joined by a disulfide. The Proton acceptor role is filled by Asn436. Cys438 serves as the catalytic Cysteine radical intermediate. Glu440 functions as the Proton acceptor in the catalytic mechanism.

It belongs to the ribonucleoside diphosphate reductase large chain family. In terms of assembly, heterotetramer composed of a homodimer of the large subunit (R1) and a homodimer of the small subunit (R2). Larger multisubunit protein complex are also active, composed of (R1)n(R2)n.

The enzyme catalyses a 2'-deoxyribonucleoside 5'-diphosphate + [thioredoxin]-disulfide + H2O = a ribonucleoside 5'-diphosphate + [thioredoxin]-dithiol. In terms of biological role, ribonucleoside-diphosphate reductase holoenzyme provides the precursors necessary for viral DNA synthesis. Allows virus growth in non-dividing cells, as well as reactivation from latency in infected hosts. Catalyzes the biosynthesis of deoxyribonucleotides from the corresponding ribonucleotides. The sequence is that of Ribonucleoside-diphosphate reductase large subunit from Equus caballus (Horse).